The primary structure comprises 580 residues: Arginine--tRNA ligase (580 aa).

Residues Ala-131–His-141 carry the 'HIGH' region motif.

The protein belongs to the class-I aminoacyl-tRNA synthetase family. Monomer.

Its subcellular location is the cytoplasm. The catalysed reaction is tRNA(Arg) + L-arginine + ATP = L-arginyl-tRNA(Arg) + AMP + diphosphate. The sequence is that of Arginine--tRNA ligase from Cereibacter sphaeroides (strain KD131 / KCTC 12085) (Rhodobacter sphaeroides).